We begin with the raw amino-acid sequence, 233 residues long: Cytochrome c biogenesis ATP-binding export protein CcmA (233 aa).

An ABC transporter domain is found at 17–233; the sequence is FAGEDLLCVR…AAGLFLEDEG (217 aa). 49–56 contributes to the ATP binding site; that stretch reads GPNGSGKS.

Belongs to the ABC transporter superfamily. CcmA exporter (TC 3.A.1.107) family. The complex is composed of two ATP-binding proteins (CcmA) and two transmembrane proteins (CcmB).

The protein localises to the cell inner membrane. It catalyses the reaction heme b(in) + ATP + H2O = heme b(out) + ADP + phosphate + H(+). Part of the ABC transporter complex CcmAB involved in the biogenesis of c-type cytochromes; once thought to export heme, this seems not to be the case, but its exact role is uncertain. Responsible for energy coupling to the transport system. The protein is Cytochrome c biogenesis ATP-binding export protein CcmA of Rhodospirillum rubrum (strain ATCC 11170 / ATH 1.1.1 / DSM 467 / LMG 4362 / NCIMB 8255 / S1).